The primary structure comprises 160 residues: Transcription elongation factor GreA (160 aa).

The stretch at 12–76 (EGVKKLEEEL…QLENMLKNAS (65 aa)) forms a coiled coil.

This sequence belongs to the GreA/GreB family.

Its function is as follows. Necessary for efficient RNA polymerase transcription elongation past template-encoded arresting sites. The arresting sites in DNA have the property of trapping a certain fraction of elongating RNA polymerases that pass through, resulting in locked ternary complexes. Cleavage of the nascent transcript by cleavage factors such as GreA or GreB allows the resumption of elongation from the new 3'terminus. GreA releases sequences of 2 to 3 nucleotides. In Clostridium botulinum (strain Hall / ATCC 3502 / NCTC 13319 / Type A), this protein is Transcription elongation factor GreA.